Here is a 146-residue protein sequence, read N- to C-terminus: Large ribosomal subunit protein bL21 (146 aa).

A disordered region spans residues 115 to 146 (KSISLGKSAPKSSAKKETVKKETKPKSEKSTN). Basic and acidic residues predominate over residues 128–146 (AKKETVKKETKPKSEKSTN).

This sequence belongs to the bacterial ribosomal protein bL21 family. Part of the 50S ribosomal subunit. Contacts protein L20.

This protein binds to 23S rRNA in the presence of protein L20. The sequence is that of Large ribosomal subunit protein bL21 from Prochlorococcus marinus (strain MIT 9312).